An 89-amino-acid polypeptide reads, in one-letter code: MAHKKGTGSTRNGRDSNSKRLGVKAYGGESVTAGSILIRQRGTSVLPGVNVGQGKDDTLFALTDGVVKFETIRRGLRNRKRINVATAAG.

The interval 1-24 (MAHKKGTGSTRNGRDSNSKRLGVK) is disordered.

Belongs to the bacterial ribosomal protein bL27 family.

This Synechococcus sp. (strain WH7803) protein is Large ribosomal subunit protein bL27.